Here is a 290-residue protein sequence, read N- to C-terminus: Lysine export transcriptional regulatory protein LysG (290 aa).

One can recognise an HTH lysR-type domain in the interval 1–57 (MNPIQLDTLLSIIDEGSFEGASLALSISPSAVSQRVKALEHHVGRVLVSRTQPAKAT). The segment at residues 18–37 (FEGASLALSISPSAVSQRVK) is a DNA-binding region (H-T-H motif).

The protein belongs to the LysR transcriptional regulatory family.

Functionally, positively regulates the expression of the exporter LysE. Induction requires the presence of a coinducer, which is either intracellular L-lysine, L-arginine or L-citrulline. L-histidine also acts as a coinducer of lysE expression, but this amino acid is not exported by LysE. The lysEG system prevents bacteriostasis due to elevated L-lysine or L-arginine concentrations that arise during growth in the presence of peptides or in mutants possessing a deregulated biosynthesis pathway. In Corynebacterium glutamicum (strain ATCC 13032 / DSM 20300 / JCM 1318 / BCRC 11384 / CCUG 27702 / LMG 3730 / NBRC 12168 / NCIMB 10025 / NRRL B-2784 / 534), this protein is Lysine export transcriptional regulatory protein LysG.